A 463-amino-acid chain; its full sequence is Polyadenylate-binding protein-interacting protein 1 (463 aa).

The tract at residues 1-86 (MSDGFERAPG…HKRTSPAAQL (86 aa)) is disordered. The MIF4G domain occupies 145–362 (TEYVQDFLNH…LKLVELRSSN (218 aa)). Residues 420-442 (RDYDENGTDGGDSYFEDDDDNEM) are disordered. Over residues 433–442 (YFEDDDDNEM) the composition is skewed to acidic residues.

In terms of assembly, interacts with the RRM1-RRM2 and C-terminal regions of epabp.

It is found in the cytoplasm. Functionally, acts as a coactivator in the regulation of translation initiation of poly(A)-containing mRNAs. In Xenopus laevis (African clawed frog), this protein is Polyadenylate-binding protein-interacting protein 1.